The primary structure comprises 381 residues: DNA double-strand break repair protein Mre11 (381 aa).

Mn(2+) contacts are provided by aspartate 9, histidine 11, aspartate 50, and aspartate 85. Histidine 86 serves as the catalytic Proton donor. Residues histidine 156, histidine 187, and histidine 189 each contribute to the Mn(2+) site.

Belongs to the MRE11/RAD32 family. In terms of assembly, homodimer. Forms a heterotetramer composed of two Mre11 subunits and two Rad50 subunits. Requires Mn(2+) as cofactor.

With respect to regulation, nuclease activity is regulated by Rad50. Part of the Rad50/Mre11 complex, which is involved in the early steps of DNA double-strand break (DSB) repair. The complex may facilitate opening of the processed DNA ends to aid in the recruitment of HerA and NurA. Mre11 binds to DSB ends and has both double-stranded 3'-5' exonuclease activity and single-stranded endonuclease activity. This chain is DNA double-strand break repair protein Mre11, found in Saccharolobus solfataricus (strain ATCC 35092 / DSM 1617 / JCM 11322 / P2) (Sulfolobus solfataricus).